Consider the following 515-residue polypeptide: Cytosolic Fe-S cluster assembly factor NAR1 homolog (515 aa).

C19, C65, C68, C71, C192, C247, C428, and C432 together coordinate [4Fe-4S] cluster.

This sequence belongs to the NARF family.

Component of the cytosolic Fe/S protein assembly machinery. Required for maturation of extramitochondrial Fe/S proteins. May play a role in the transfer of pre-assembled Fe/S clusters to target apoproteins. This Schizosaccharomyces japonicus (strain yFS275 / FY16936) (Fission yeast) protein is Cytosolic Fe-S cluster assembly factor NAR1 homolog.